We begin with the raw amino-acid sequence, 278 residues long: Large ribosomal subunit protein uL2 (278 aa).

Basic residues-rich tracts occupy residues 210 to 220 and 257 to 278; these read GRMRWKGKRPS and TRRK…NKKR. A disordered region spans residues 210-278; that stretch reads GRMRWKGKRP…VRRRKSNKKR (69 aa).

It belongs to the universal ribosomal protein uL2 family. Part of the 50S ribosomal subunit. Forms a bridge to the 30S subunit in the 70S ribosome.

One of the primary rRNA binding proteins. Required for association of the 30S and 50S subunits to form the 70S ribosome, for tRNA binding and peptide bond formation. It has been suggested to have peptidyltransferase activity; this is somewhat controversial. Makes several contacts with the 16S rRNA in the 70S ribosome. This is Large ribosomal subunit protein uL2 from Acidothermus cellulolyticus (strain ATCC 43068 / DSM 8971 / 11B).